Consider the following 599-residue polypeptide: Elongation factor 4 (599 aa).

Residues 2 to 184 form the tr-type G domain; the sequence is KNIRNFSIIA…RLVRDIPPPQ (183 aa). GTP contacts are provided by residues 14-19 and 131-134; these read DHGKST and NKID.

This sequence belongs to the TRAFAC class translation factor GTPase superfamily. Classic translation factor GTPase family. LepA subfamily.

It is found in the cell inner membrane. It catalyses the reaction GTP + H2O = GDP + phosphate + H(+). In terms of biological role, required for accurate and efficient protein synthesis under certain stress conditions. May act as a fidelity factor of the translation reaction, by catalyzing a one-codon backward translocation of tRNAs on improperly translocated ribosomes. Back-translocation proceeds from a post-translocation (POST) complex to a pre-translocation (PRE) complex, thus giving elongation factor G a second chance to translocate the tRNAs correctly. Binds to ribosomes in a GTP-dependent manner. This chain is Elongation factor 4, found in Salmonella paratyphi A (strain ATCC 9150 / SARB42).